The chain runs to 401 residues: Chalcone synthase 4 (401 aa).

The active site involves cysteine 168.

This sequence belongs to the thiolase-like superfamily. Chalcone/stilbene synthases family.

The catalysed reaction is (E)-4-coumaroyl-CoA + 3 malonyl-CoA + 3 H(+) = 2',4,4',6'-tetrahydroxychalcone + 3 CO2 + 4 CoA. It functions in the pathway secondary metabolite biosynthesis; flavonoid biosynthesis. Its function is as follows. The primary product of this enzyme is 4,2',4',6'-tetrahydroxychalcone (also termed naringenin-chalcone or chalcone) which can under specific conditions spontaneously isomerize into naringenin. The chain is Chalcone synthase 4 (CHS4) from Sorghum bicolor (Sorghum).